Reading from the N-terminus, the 241-residue chain is Large ribosomal subunit protein uL3 (241 aa).

2 disordered regions span residues valine 139–methionine 166 and alanine 214–alanine 241. Glutamine 151 carries the post-translational modification N5-methylglutamine. A compositionally biased stretch (low complexity) spans alanine 229–alanine 241.

In terms of assembly, part of the 50S ribosomal subunit. Forms a cluster with proteins L14 and L19. In terms of processing, methylated, on either Lys-155 or Lys-158. Post-translationally, methylated by PrmB.

Its function is as follows. One of the primary rRNA binding proteins, it binds directly near the 3'-end of the 23S rRNA, where it nucleates assembly of the 50S subunit. This Rhodopseudomonas palustris (strain ATCC BAA-98 / CGA009) protein is Large ribosomal subunit protein uL3.